Here is a 1610-residue protein sequence, read N- to C-terminus: Adenylate cyclase type 10 (1610 aa).

2 Guanylate cyclase domains span residues 42-179 (VLMF…RLAQ) and 293-418 (TIVF…ARMM). Residues Asp-47 and Ile-48 each contribute to the Mg(2+) site. 47 to 52 (DISGFT) provides a ligand contact to ATP. Lys-95 lines the hydrogencarbonate pocket. Asp-99 is a Mg(2+) binding site. ATP is bound by residues Asp-99 and Lys-144. Residues Val-167, Arg-176, and Met-337 each contribute to the hydrogencarbonate site. ATP-binding positions include Val-406 and 412 to 416 (NIAAR).

This sequence belongs to the adenylyl cyclase class-4/guanylyl cyclase family. Requires Mg(2+) as cofactor. Mn(2+) serves as cofactor.

Its subcellular location is the cell membrane. It localises to the cytoplasm. It is found in the cytoskeleton. The protein localises to the perinuclear region. The protein resides in the nucleus. Its subcellular location is the cell projection. It localises to the cilium. The catalysed reaction is ATP = 3',5'-cyclic AMP + diphosphate. Its activity is regulated as follows. Activated by manganese or magnesium ions. In the presence of magnesium ions, the enzyme is activated by bicarbonate. Calcium mildly increases the enzyme activity, also in the presence of magnesium ions. Catalyzes the formation of the signaling molecule cAMP. May function as sensor that mediates responses to changes in cellular bicarbonate and CO(2) levels. Has a critical role in mammalian spermatogenesis by producing the cAMP which regulates cAMP-responsive nuclear factors indispensable for sperm maturation in the epididymis. Induces capacitation, the maturational process that sperm undergo prior to fertilization. Involved in ciliary beat regulation. This is Adenylate cyclase type 10 (ADCY10) from Oryctolagus cuniculus (Rabbit).